A 146-amino-acid chain; its full sequence is Hemoglobin subunit beta (146 aa).

Val-1 is modified (N-acetylvaline). Positions 2–146 constitute a Globin domain; the sequence is HLTPEEKSAV…VANALAHKYH (145 aa). At Thr-12 the chain carries Phosphothreonine. Phosphoserine is present on Ser-44. N6-acetyllysine is present on Lys-59. Heme b is bound at residue His-63. An N6-acetyllysine modification is found at Lys-82. His-92 lines the heme b pocket. Cys-93 bears the S-nitrosocysteine mark. Lys-144 carries the post-translational modification N6-acetyllysine.

This sequence belongs to the globin family. In terms of assembly, heterotetramer of two alpha chains and two beta chains. In terms of tissue distribution, red blood cells.

Its function is as follows. Involved in oxygen transport from the lung to the various peripheral tissues. The polypeptide is Hemoglobin subunit beta (HBB) (Hylobates lar (Lar gibbon)).